Here is a 96-residue protein sequence, read N- to C-terminus: UPF0235 protein VCM66_0443 (96 aa).

This sequence belongs to the UPF0235 family.

This is UPF0235 protein VCM66_0443 from Vibrio cholerae serotype O1 (strain M66-2).